The chain runs to 409 residues: uncharacterized protein (409 aa).

Helical transmembrane passes span 53–73 (IITLVGLLCNIGMYLIMYVHC), 83–103 (WCYFAVAFLIFAYQTLDNVDG), 115–135 (LGELFDHVCDALSVAMFAIVM), 141–161 (IGPYWTFFSFIVGMWPFYLAH), 183–203 (VLFMIIEIITGIFGSDIWTYG), 205–225 (STTVGKIATVFVSIGAVVTCL), 243–263 (CLLQLTPICLFTALIVIWASV), 265–285 (NLITEQPHLFIMTLGILFGYI), 299–319 (CSLFYPIFVPIIIVVLNSILA), and 329–349 (TVALWILFSIACAQFLLFSYF). The span at 388-401 (EEGSSSIGNSTDDI) shows a compositional bias: polar residues. The interval 388–409 (EEGSSSIGNSTDDINPSEIEEI) is disordered.

This sequence belongs to the CDP-alcohol phosphatidyltransferase class-I family.

The protein localises to the membrane. This is an uncharacterized protein from Dictyostelium discoideum (Social amoeba).